A 180-amino-acid polypeptide reads, in one-letter code: NADH-quinone oxidoreductase subunit I (180 aa).

4Fe-4S ferredoxin-type domains follow at residues 48–80 (IVLTRDPDGDERCVACNLCAVACPVDCISLQKA) and 90–119 (EFFRINFSRCIFCGLCEEACPTTAIQLTPD). Residues Cys-60, Cys-63, Cys-66, Cys-70, Cys-99, Cys-102, Cys-105, and Cys-109 each contribute to the [4Fe-4S] cluster site.

This sequence belongs to the complex I 23 kDa subunit family. NDH-1 is composed of 13 different subunits. Subunits NuoA, H, J, K, L, M, N constitute the membrane sector of the complex. Requires [4Fe-4S] cluster as cofactor.

It localises to the cell inner membrane. The enzyme catalyses a quinone + NADH + 5 H(+)(in) = a quinol + NAD(+) + 4 H(+)(out). NDH-1 shuttles electrons from NADH, via FMN and iron-sulfur (Fe-S) centers, to quinones in the respiratory chain. The immediate electron acceptor for the enzyme in this species is believed to be ubiquinone. Couples the redox reaction to proton translocation (for every two electrons transferred, four hydrogen ions are translocated across the cytoplasmic membrane), and thus conserves the redox energy in a proton gradient. The sequence is that of NADH-quinone oxidoreductase subunit I from Sodalis glossinidius (strain morsitans).